The primary structure comprises 127 residues: Aspartate 1-decarboxylase (127 aa).

The active-site Schiff-base intermediate with substrate; via pyruvic acid is the Ser25. Ser25 carries the pyruvic acid (Ser) modification. Thr57 is a substrate binding site. The active-site Proton donor is Tyr58. Residue 73 to 75 coordinates substrate; the sequence is GAA.

The protein belongs to the PanD family. Heterooctamer of four alpha and four beta subunits. The cofactor is pyruvate. Is synthesized initially as an inactive proenzyme, which is activated by self-cleavage at a specific serine bond to produce a beta-subunit with a hydroxyl group at its C-terminus and an alpha-subunit with a pyruvoyl group at its N-terminus.

The protein localises to the cytoplasm. The catalysed reaction is L-aspartate + H(+) = beta-alanine + CO2. It participates in cofactor biosynthesis; (R)-pantothenate biosynthesis; beta-alanine from L-aspartate: step 1/1. Functionally, catalyzes the pyruvoyl-dependent decarboxylation of aspartate to produce beta-alanine. The chain is Aspartate 1-decarboxylase from Trichormus variabilis (strain ATCC 29413 / PCC 7937) (Anabaena variabilis).